A 133-amino-acid chain; its full sequence is ATP synthase epsilon chain (133 aa).

It belongs to the ATPase epsilon chain family. In terms of assembly, F-type ATPases have 2 components, CF(1) - the catalytic core - and CF(0) - the membrane proton channel. CF(1) has five subunits: alpha(3), beta(3), gamma(1), delta(1), epsilon(1). CF(0) has three main subunits: a, b and c.

The protein localises to the cell membrane. Produces ATP from ADP in the presence of a proton gradient across the membrane. This Bacillus mycoides (strain KBAB4) (Bacillus weihenstephanensis) protein is ATP synthase epsilon chain.